The primary structure comprises 314 residues: 3'-5' exoribonuclease YhaM (314 aa).

One can recognise an HD domain in the interval 163-279; it reads HVVSMLHLAK…LHYIDNLDAK (117 aa).

It belongs to the YhaM family.

Functionally, shows a 3'-5' exoribonuclease activity. The protein is 3'-5' exoribonuclease YhaM of Bacillus pumilus (strain SAFR-032).